The chain runs to 446 residues: Phosphoglucosamine mutase (446 aa).

The Phosphoserine intermediate role is filled by Ser102. Positions 102, 239, 241, and 243 each coordinate Mg(2+). Ser102 is modified (phosphoserine).

Belongs to the phosphohexose mutase family. Mg(2+) serves as cofactor. In terms of processing, activated by phosphorylation.

It catalyses the reaction alpha-D-glucosamine 1-phosphate = D-glucosamine 6-phosphate. Functionally, catalyzes the conversion of glucosamine-6-phosphate to glucosamine-1-phosphate. The sequence is that of Phosphoglucosamine mutase from Solibacter usitatus (strain Ellin6076).